Consider the following 185-residue polypeptide: Threonylcarbamoyl-AMP synthase (185 aa).

A YrdC-like domain is found at 4 to 185; the sequence is SWRVQQAARE…LATGEIVRPG (182 aa).

It belongs to the SUA5 family. TsaC subfamily.

The protein localises to the cytoplasm. It catalyses the reaction L-threonine + hydrogencarbonate + ATP = L-threonylcarbamoyladenylate + diphosphate + H2O. Functionally, required for the formation of a threonylcarbamoyl group on adenosine at position 37 (t(6)A37) in tRNAs that read codons beginning with adenine. Catalyzes the conversion of L-threonine, HCO(3)(-)/CO(2) and ATP to give threonylcarbamoyl-AMP (TC-AMP) as the acyladenylate intermediate, with the release of diphosphate. This is Threonylcarbamoyl-AMP synthase from Pseudomonas putida (strain W619).